Consider the following 208-residue polypeptide: Uridine kinase (208 aa).

Residue 12-19 (GGSGGGKT) participates in ATP binding.

This sequence belongs to the uridine kinase family.

Its subcellular location is the cytoplasm. The catalysed reaction is uridine + ATP = UMP + ADP + H(+). The enzyme catalyses cytidine + ATP = CMP + ADP + H(+). Its pathway is pyrimidine metabolism; CTP biosynthesis via salvage pathway; CTP from cytidine: step 1/3. It functions in the pathway pyrimidine metabolism; UMP biosynthesis via salvage pathway; UMP from uridine: step 1/1. The protein is Uridine kinase of Streptococcus pyogenes serotype M18 (strain MGAS8232).